Here is a 94-residue protein sequence, read N- to C-terminus: Venom peptide SjAPI (94 aa).

Positions 1–24 (MKWGALLCIFGFLAFCSVLDRGLG) are cleaved as a signal peptide. A propeptide spanning residues 25–30 (WIPDIW) is cleaved from the precursor. 5 disulfide bridges follow: Cys33–Cys70, Cys43–Cys66, Cys47–Cys62, Cys51–Cys92, and Cys72–Cys86. The TIL domain occupies 33–92 (CSSKNEEFQQCGSSCPETCANHKNPEPKSCAAVCFVGCVCKPGFIRDDLKGSICVKPEDC). Residues 63 to 65 (AAV) form a protease binding loop region.

The protein belongs to the serine protease inhibitor-like (TIL domain-containing) family. As to expression, expressed by the venom gland.

It localises to the secreted. Functionally, recombinant protein inhibits both alpha-chymotrypsin (Ki=97.1 nM) and elastase (Ki=3700 nM). The polypeptide is Venom peptide SjAPI (Scorpiops jendeki (Scorpion)).